An 85-amino-acid chain; its full sequence is Large ribosomal subunit protein bL27 (85 aa).

Positions 1 to 10 (MAQKKGGGST) are enriched in gly residues. The interval 1–20 (MAQKKGGGSTRNGRDSQPKM) is disordered.

This sequence belongs to the bacterial ribosomal protein bL27 family.

This Methylibium petroleiphilum (strain ATCC BAA-1232 / LMG 22953 / PM1) protein is Large ribosomal subunit protein bL27.